Consider the following 134-residue polypeptide: Putative pre-16S rRNA nuclease (134 aa).

Belongs to the YqgF nuclease family.

It localises to the cytoplasm. In terms of biological role, could be a nuclease involved in processing of the 5'-end of pre-16S rRNA. The sequence is that of Putative pre-16S rRNA nuclease from Helicobacter pylori (strain Shi470).